The chain runs to 492 residues: Ketol-acid reductoisomerase (NADP(+)) (492 aa).

The KARI N-terminal Rossmann domain maps to 15-208; sequence AQLGQCRFMD…GGDRAGVLQS (194 aa). NADP(+) contacts are provided by residues 45-48, arginine 68, arginine 76, serine 78, and 108-110; these read CGAQ and DKQ. Histidine 132 is a catalytic residue. Glycine 158 is a binding site for NADP(+). 2 KARI C-terminal knotted domains span residues 209–353 and 354–486; these read SFIA…DEQT and YFDK…MTDM. Mg(2+) is bound by residues aspartate 217, glutamate 221, glutamate 389, and glutamate 393. Serine 414 is a substrate binding site.

The protein belongs to the ketol-acid reductoisomerase family. It depends on Mg(2+) as a cofactor.

It catalyses the reaction (2R)-2,3-dihydroxy-3-methylbutanoate + NADP(+) = (2S)-2-acetolactate + NADPH + H(+). It carries out the reaction (2R,3R)-2,3-dihydroxy-3-methylpentanoate + NADP(+) = (S)-2-ethyl-2-hydroxy-3-oxobutanoate + NADPH + H(+). It functions in the pathway amino-acid biosynthesis; L-isoleucine biosynthesis; L-isoleucine from 2-oxobutanoate: step 2/4. The protein operates within amino-acid biosynthesis; L-valine biosynthesis; L-valine from pyruvate: step 2/4. In terms of biological role, involved in the biosynthesis of branched-chain amino acids (BCAA). Catalyzes an alkyl-migration followed by a ketol-acid reduction of (S)-2-acetolactate (S2AL) to yield (R)-2,3-dihydroxy-isovalerate. In the isomerase reaction, S2AL is rearranged via a Mg-dependent methyl migration to produce 3-hydroxy-3-methyl-2-ketobutyrate (HMKB). In the reductase reaction, this 2-ketoacid undergoes a metal-dependent reduction by NADPH to yield (R)-2,3-dihydroxy-isovalerate. The sequence is that of Ketol-acid reductoisomerase (NADP(+)) from Shewanella oneidensis (strain ATCC 700550 / JCM 31522 / CIP 106686 / LMG 19005 / NCIMB 14063 / MR-1).